We begin with the raw amino-acid sequence, 444 residues long: Radical S-adenosyl methionine domain-containing protein 1, mitochondrial (444 aa).

The transit peptide at Met1–Ser39 directs the protein to the mitochondrion. The Radical SAM core domain maps to His40–His274. An S-adenosyl-L-methionine-binding site is contributed by Tyr47. [4Fe-4S] cluster-binding residues include Cys53, Cys57, and Cys60. S-adenosyl-L-methionine contacts are provided by residues Gly102, Gly103 to Thr104, Glu135, Gln162, Arg174, and Asp199.

It belongs to the anaerobic coproporphyrinogen-III oxidase family. HemW subfamily. Requires [4Fe-4S] cluster as cofactor.

It localises to the mitochondrion. May be a heme chaperone, appears to bind heme. Homologous bacterial proteins do not have oxygen-independent coproporphyrinogen-III oxidase activity. Binds 1 [4Fe-4S] cluster. The cluster is coordinated with 3 cysteines and an exchangeable S-adenosyl-L-methionine. The protein is Radical S-adenosyl methionine domain-containing protein 1, mitochondrial (rsad1) of Danio rerio (Zebrafish).